A 419-amino-acid chain; its full sequence is UDP-N-acetylglucosamine 1-carboxyvinyltransferase (419 aa).

22–23 (KN) is a phosphoenolpyruvate binding site. Position 95 (Arg-95) interacts with UDP-N-acetyl-alpha-D-glucosamine. Catalysis depends on Cys-119, which acts as the Proton donor. Cys-119 carries the 2-(S-cysteinyl)pyruvic acid O-phosphothioketal modification. Residues 164–167 (KVSV), Asp-308, and Ile-330 each bind UDP-N-acetyl-alpha-D-glucosamine.

This sequence belongs to the EPSP synthase family. MurA subfamily.

The protein localises to the cytoplasm. It carries out the reaction phosphoenolpyruvate + UDP-N-acetyl-alpha-D-glucosamine = UDP-N-acetyl-3-O-(1-carboxyvinyl)-alpha-D-glucosamine + phosphate. It functions in the pathway cell wall biogenesis; peptidoglycan biosynthesis. In terms of biological role, cell wall formation. Adds enolpyruvyl to UDP-N-acetylglucosamine. The polypeptide is UDP-N-acetylglucosamine 1-carboxyvinyltransferase (Rickettsia peacockii (strain Rustic)).